The sequence spans 192 residues: UPF0301 protein BMA10247_1859 (192 aa).

This sequence belongs to the UPF0301 (AlgH) family.

This Burkholderia mallei (strain NCTC 10247) protein is UPF0301 protein BMA10247_1859.